The chain runs to 437 residues: MLDIQQLRSDLQNITTCLAQRGYNFPVSDFENLESQRKSIQTLTQTLQAKRNSASKQIGIAKQQGEDVSTIMAEIANMGDALKQAENQFESIQTKLQQLLMEIPNLPHNSVPTGKNADGNLEIRRWGTPKNFDFTVKDHVSIGEHLGLIDFETAAKLSGARFCLLKGGVARLHRALAQFMLDAHTQENGYNEVYVPYLVNADCLRGTGQLPKFEQDLFSVLTNAQDETDNVDKTGMVGLHLIPTAEVPLANIVRNTIVPLEQLPLKFVAHTPCFRSEAGSYGKDTRGLIRQHQFDKVELVQITHPEKSYEALESLVGHAEKILQKLELPYRIMLLCTGDMGFSAAKTYDIEVWLPAQQTYREISSCSNCEAFQARRMQARFRKGQDKPELLHTLNGSGLAVGRTLVAILENYQNEDGSVTIPEILQTYMGGIKRISL.

244-246 (TAE) contacts L-serine. ATP is bound at residue 275–277 (RSE). Residue E298 participates in L-serine binding. 362 to 365 (EISS) lines the ATP pocket. S397 contacts L-serine.

Belongs to the class-II aminoacyl-tRNA synthetase family. Type-1 seryl-tRNA synthetase subfamily. As to quaternary structure, homodimer. The tRNA molecule binds across the dimer.

It localises to the cytoplasm. It catalyses the reaction tRNA(Ser) + L-serine + ATP = L-seryl-tRNA(Ser) + AMP + diphosphate + H(+). It carries out the reaction tRNA(Sec) + L-serine + ATP = L-seryl-tRNA(Sec) + AMP + diphosphate + H(+). The protein operates within aminoacyl-tRNA biosynthesis; selenocysteinyl-tRNA(Sec) biosynthesis; L-seryl-tRNA(Sec) from L-serine and tRNA(Sec): step 1/1. Its function is as follows. Catalyzes the attachment of serine to tRNA(Ser). Is also able to aminoacylate tRNA(Sec) with serine, to form the misacylated tRNA L-seryl-tRNA(Sec), which will be further converted into selenocysteinyl-tRNA(Sec). The protein is Serine--tRNA ligase of Nitrosomonas eutropha (strain DSM 101675 / C91 / Nm57).